Reading from the N-terminus, the 351-residue chain is Nicotinate-nucleotide--dimethylbenzimidazole phosphoribosyltransferase (351 aa).

The Proton acceptor role is filled by E318.

It belongs to the CobT family.

The enzyme catalyses 5,6-dimethylbenzimidazole + nicotinate beta-D-ribonucleotide = alpha-ribazole 5'-phosphate + nicotinate + H(+). The protein operates within nucleoside biosynthesis; alpha-ribazole biosynthesis; alpha-ribazole from 5,6-dimethylbenzimidazole: step 1/2. In terms of biological role, catalyzes the synthesis of alpha-ribazole-5'-phosphate from nicotinate mononucleotide (NAMN) and 5,6-dimethylbenzimidazole (DMB). The polypeptide is Nicotinate-nucleotide--dimethylbenzimidazole phosphoribosyltransferase (Shewanella frigidimarina (strain NCIMB 400)).